The primary structure comprises 470 residues: Monocarboxylate transporter 4 (470 aa).

Residues 1-17 lie on the Cytoplasmic side of the membrane; the sequence is MGGAVVDEGPTGIKAPD. A helical transmembrane segment spans residues 18-38; the sequence is GGWGWAVLFGCFIITGFSYAF. Residues 39-61 lie on the Extracellular side of the membrane; it reads PKAVSVFFKELMHEFGIGYSDTA. A helical transmembrane segment spans residues 62-82; it reads WISSILLAMLYGTGPLCSVCV. Residues 83–84 are Cytoplasmic-facing; that stretch reads NR. The helical transmembrane segment at 85 to 105 threads the bilayer; that stretch reads FGCRPVMLVGGLFASLGMVAA. Residues 106 to 109 are Extracellular-facing; that stretch reads SFCR. Residues 110–130 traverse the membrane as a helical segment; sequence SIIQIYLTTGVITGLGLALNF. Residues 131-149 are Cytoplasmic-facing; sequence QPSLIMLNRYFNKRRPIAN. Residues 150–170 form a helical membrane-spanning segment; the sequence is GLAAAGSPVFLCALSPLGQLL. Residues 171-179 are Extracellular-facing; the sequence is QDHYGWRGG. The helical transmembrane segment at 180–200 threads the bilayer; it reads FLILGGLLLNCCVCAALMRPL. At 201 to 231 the chain is on the cytoplasmic side; sequence VAPQVGGGTEPRGPQRPPQRLLDLSVFRDRG. The helical transmembrane segment at 232–252 threads the bilayer; that stretch reads FLIYAVAASIMVLGLFVPPVF. Residues 253 to 267 lie on the Extracellular side of the membrane; the sequence is VVSYAKDMGVPDTKA. The chain crosses the membrane as a helical span at residues 268 to 288; that stretch reads AFLLTILGFIDIFARPTAGFI. Residues 289-298 lie on the Cytoplasmic side of the membrane; that stretch reads TGLKKVRPYS. Residues 299–319 form a helical membrane-spanning segment; it reads VYLFSFAMFFNGFTDLTGSTA. The Extracellular segment spans residues 320 to 321; sequence TD. Residues 322–342 traverse the membrane as a helical segment; sequence YGGLVVFCIFFGISYGMVGAL. Residues 343–355 lie on the Cytoplasmic side of the membrane; it reads QFEVLMAIVGTQK. A helical membrane pass occupies residues 356 to 376; the sequence is FSSAIGLVLLLEAVAVLIGPP. Over 377–391 the chain is Extracellular; sequence SGGKLLDATKVYKYV. A helical membrane pass occupies residues 392-412; it reads FILAGAEVLTSSLVLLLGNFF. Residues 413-470 lie on the Cytoplasmic side of the membrane; sequence CIGKRKRPEVTEPEEVASEEKLHKPPVDVGVDSREVEHFLKAEPEKNGEVVHTPETSV. Basolateral sorting signal stretches follow at residues 429-446 and 446-470; these read ASEEKLHKPPVDVGVDSR and REVEHFLKAEPEKNGEVVHTPETSV. Position 430 is a phosphoserine (serine 430). Residue threonine 465 is modified to Phosphothreonine. Phosphoserine is present on serine 469.

It belongs to the major facilitator superfamily. Monocarboxylate porter (TC 2.A.1.13) family. As to quaternary structure, interacts with BSG; interaction mediates SLC16A3 targeting to the plasma membrane.

It is found in the cell membrane. The protein resides in the basolateral cell membrane. The catalysed reaction is (S)-lactate(in) + H(+)(in) = (S)-lactate(out) + H(+)(out). The enzyme catalyses pyruvate(out) + H(+)(out) = pyruvate(in) + H(+)(in). Functionally, proton-dependent transporter of monocarboxylates such as L-lactate and pyruvate. Plays a predominant role in the L-lactate efflux from highly glycolytic cells. This is Monocarboxylate transporter 4 (Slc16a3) from Mus musculus (Mouse).